The following is a 300-amino-acid chain: MAKVKVRIPATTANMGPGFDTLGMALKLYNEIEVEEINGKTQIYNNGLKSEEDFGNNLIYKSIIETMNKGGYSYKGFKINVVKCDVPISRGLGSSSACIVGGIKIANEIMGNKLELKDMIDLATKIEGHPDNVVPAMVGGMVVSLKTGEDIKYSKIDLPKQLKFVAMIPSFQVNTALSRKVLPKSYLKEECIFNISRCAMLVSALYNGEFDKLRTCFQDKIHQPYRKNLIKNSDDIFKKAVEFGSIGEFISGSGSTLMAVLNKNEDEFVISIKRYLSGLQDKWNVILLEPDLEGVRIVKI.

87–97 provides a ligand contact to ATP; the sequence is PISRGLGSSSA.

This sequence belongs to the GHMP kinase family. Homoserine kinase subfamily.

Its subcellular location is the cytoplasm. It catalyses the reaction L-homoserine + ATP = O-phospho-L-homoserine + ADP + H(+). Its pathway is amino-acid biosynthesis; L-threonine biosynthesis; L-threonine from L-aspartate: step 4/5. Its function is as follows. Catalyzes the ATP-dependent phosphorylation of L-homoserine to L-homoserine phosphate. The polypeptide is Homoserine kinase (Clostridium kluyveri (strain ATCC 8527 / DSM 555 / NBRC 12016 / NCIMB 10680 / K1)).